We begin with the raw amino-acid sequence, 374 residues long: Chaperone protein DnaJ (374 aa).

The region spanning 5–70 (DYYEVLGVSK…QKRAAYDQYG (66 aa)) is the J domain. Residues 132 to 210 (GTTVKIRVPT…CHGHGRVEET (79 aa)) form a CR-type zinc finger. 8 residues coordinate Zn(2+): Cys-145, Cys-148, Cys-162, Cys-165, Cys-184, Cys-187, Cys-198, and Cys-201. CXXCXGXG motif repeat units lie at residues 145-152 (CKPCGGSG), 162-169 (CTTCGGHG), 184-191 (CPNCRGQG), and 198-205 (CKECHGHG).

The protein belongs to the DnaJ family. In terms of assembly, homodimer. The cofactor is Zn(2+).

It localises to the cytoplasm. Functionally, participates actively in the response to hyperosmotic and heat shock by preventing the aggregation of stress-denatured proteins and by disaggregating proteins, also in an autonomous, DnaK-independent fashion. Unfolded proteins bind initially to DnaJ; upon interaction with the DnaJ-bound protein, DnaK hydrolyzes its bound ATP, resulting in the formation of a stable complex. GrpE releases ADP from DnaK; ATP binding to DnaK triggers the release of the substrate protein, thus completing the reaction cycle. Several rounds of ATP-dependent interactions between DnaJ, DnaK and GrpE are required for fully efficient folding. Also involved, together with DnaK and GrpE, in the DNA replication of plasmids through activation of initiation proteins. The chain is Chaperone protein DnaJ from Saccharophagus degradans (strain 2-40 / ATCC 43961 / DSM 17024).